A 38-amino-acid chain; its full sequence is Photosystem I reaction center subunit VIII (38 aa).

The helical transmembrane segment at 12–32 (WILIPIIGWLMPAVVMGLLFL) threads the bilayer.

The protein belongs to the PsaI family.

It localises to the cellular thylakoid membrane. Its function is as follows. May help in the organization of the PsaL subunit. This Gloeothece citriformis (strain PCC 7424) (Cyanothece sp. (strain PCC 7424)) protein is Photosystem I reaction center subunit VIII.